We begin with the raw amino-acid sequence, 610 residues long: Manganese lipoxygenase (610 aa).

The first 16 residues, 1–16, serve as a signal peptide directing secretion; the sequence is MVALLIFLGIFTCVET. In terms of domain architecture, Lipoxygenase spans 47 to 610; it reads FTLPNEDDEI…PGVIPFYLSV (564 aa). Residues asparagine 157 and asparagine 259 are each glycosylated (N-linked (GlcNAc...) asparagine). Histidine 290 and histidine 295 together coordinate Mn(2+). Residue asparagine 386 is glycosylated (N-linked (GlcNAc...) asparagine). Residues histidine 475 and asparagine 479 each contribute to the Mn(2+) site. The N-linked (GlcNAc...) asparagine glycan is linked to asparagine 540. Valine 610 contacts Mn(2+).

It belongs to the lipoxygenase family. Manganese lipoxygenase subfamily. Requires Mn(2+) as cofactor. In terms of processing, N- and O-glycosylated.

The protein localises to the secreted. The enzyme catalyses (9Z,12Z)-octadecadienoate + O2 = (11S)-hydroperoxy-(9Z,12Z)-octadecadienoate. It catalyses the reaction (9Z,12Z)-octadecadienoate + O2 = (11R)-hydroperoxy-(9Z,12Z)-octadecadienoate. The catalysed reaction is (9Z,12Z)-octadecadienoate + O2 = (13S)-hydroperoxy-(9Z,11E)-octadecadienoate. It carries out the reaction (9Z,12Z,15Z)-octadecatrienoate + O2 = (11S)-hydroperoxy-(9Z,12Z,15Z)-octadecatrienoate. Functionally, lipoxygenase that metabolizes linoleic and alpha-linolenic acids to 9-, 11- and 13-hydroperoxy fatty acids. Oxidizes linoleic acid to mainly 11R-, 13S- and racemic 9-HPODE, and alpha-linolenic acid to 11-HPOTrE. This is Manganese lipoxygenase from Fusarium oxysporum (strain Fo5176) (Fusarium vascular wilt).